The following is a 130-amino-acid chain: Small ribosomal subunit protein uS9 (130 aa).

The segment at 110-130 is disordered; it reads AKERKKYGRKGARARFQFSKR. Basic residues predominate over residues 111–130; that stretch reads KERKKYGRKGARARFQFSKR.

It belongs to the universal ribosomal protein uS9 family.

This chain is Small ribosomal subunit protein uS9, found in Syntrophotalea carbinolica (strain DSM 2380 / NBRC 103641 / GraBd1) (Pelobacter carbinolicus).